A 154-amino-acid polypeptide reads, in one-letter code: Putative nuclear shuttle protein (154 aa).

It belongs to the nanoviridae nuclear shuttle protein family.

The protein localises to the host nucleus. It localises to the host cytoplasm. In terms of biological role, putative nuclear shuttle protein. The chain is Putative nuclear shuttle protein (DNA-N) from Musa (BBTV).